The chain runs to 55 residues: Protein CADMIUM TOLERANCE 1 (55 aa).

A helical membrane pass occupies residues 24 to 40; that stretch reads GCLYACIFTALCCFCCY.

It belongs to the CYSTM1 family.

The protein localises to the cell membrane. Its subcellular location is the secreted. The protein resides in the cell wall. Confers resistance to heavy metal ions (e.g. cadmium (CdCl(2)) and copper (CuCl(2))) by chelating them at the plasma membrane of root cells, thus stopping their entry and reducing their accumulation. Binds to aluminium (Al). The sequence is that of Protein CADMIUM TOLERANCE 1 from Oryza sativa subsp. indica (Rice).